The primary structure comprises 90 residues: Small ribosomal subunit protein bS16 (90 aa).

It belongs to the bacterial ribosomal protein bS16 family.

This Listeria monocytogenes serotype 4b (strain F2365) protein is Small ribosomal subunit protein bS16.